We begin with the raw amino-acid sequence, 228 residues long: Ephrin-A5 (228 aa).

An N-terminal signal peptide occupies residues 1–20 (MLHVEMLTLVFLVLWMCVFS). The region spanning 29-162 (ADRYAVYWNS…KLKVFVRPTN (134 aa)) is the Ephrin RBD domain. N37 carries N-linked (GlcNAc...) asparagine glycosylation. Intrachain disulfides connect C62–C102 and C90–C151. Positions 186-205 (EPADDTVHESAEPSRGENAA) are disordered. The span at 190–200 (DTVHESAEPSR) shows a compositional bias: basic and acidic residues. The GPI-anchor amidated asparagine moiety is linked to residue N203. A propeptide spans 204–228 (AAQTPRIPSRLLAILLFLLAMLLTL) (removed in mature form).

It belongs to the ephrin family. In terms of assembly, binds to EPHB2. Interacts with EPHA8; activates EPHA8. Binds to the receptor tyrosine kinases EPHA2, EPHA3 and EPHB1. Forms a ternary EFNA5-EPHA3-ADAM10 complex mediating EFNA5 extracellular domain shedding by ADAM10 which regulates the EFNA5-EPHA3 complex internalization and function.

The protein resides in the cell membrane. It localises to the membrane. The protein localises to the caveola. In terms of biological role, cell surface GPI-bound ligand for Eph receptors, a family of receptor tyrosine kinases which are crucial for migration, repulsion and adhesion during neuronal, vascular and epithelial development. Binds promiscuously Eph receptors residing on adjacent cells, leading to contact-dependent bidirectional signaling into neighboring cells. The signaling pathway downstream of the receptor is referred to as forward signaling while the signaling pathway downstream of the ephrin ligand is referred to as reverse signaling. Induces compartmentalized signaling within a caveolae-like membrane microdomain when bound to the extracellular domain of its cognate receptor. This signaling event requires the activity of the Fyn tyrosine kinase. Activates the EPHA3 receptor to regulate cell-cell adhesion and cytoskeletal organization. With the receptor EPHA2 may regulate lens fiber cells shape and interactions and be important for lens transparency maintenance. May function actively to stimulate axon fasciculation. The interaction of EFNA5 with EPHA5 also mediates communication between pancreatic islet cells to regulate glucose-stimulated insulin secretion. Cognate/functional ligand for EPHA7, their interaction regulates brain development modulating cell-cell adhesion and repulsion. This Homo sapiens (Human) protein is Ephrin-A5 (EFNA5).